The sequence spans 301 residues: Ribonuclease HIII (301 aa).

An RNase H type-2 domain is found at 84–301 (ASAIGSDEVG…TEKAARIAKK (218 aa)). A divalent metal cation is bound by residues Asp-90, Glu-91, and Asp-195.

This sequence belongs to the RNase HII family. RnhC subfamily. Requires Mn(2+) as cofactor. The cofactor is Mg(2+).

Its subcellular location is the cytoplasm. The enzyme catalyses Endonucleolytic cleavage to 5'-phosphomonoester.. Its function is as follows. Endonuclease that specifically degrades the RNA of RNA-DNA hybrids. The sequence is that of Ribonuclease HIII from Geobacillus sp. (strain WCH70).